The following is a 118-amino-acid chain: uncharacterized protein (118 aa).

This sequence to E.coli YeaO.

This is an uncharacterized protein from Mycobacterium bovis (strain ATCC BAA-935 / AF2122/97).